The sequence spans 397 residues: 1-deoxy-D-xylulose 5-phosphate reductoisomerase (397 aa).

NADPH contacts are provided by Ser-10, Gly-11, Ser-12, Ile-13, Ala-36, Arg-37, and Asn-124. Lys-125 is a binding site for 1-deoxy-D-xylulose 5-phosphate. Glu-126 provides a ligand contact to NADPH. Asp-150 is a binding site for Mn(2+). 1-deoxy-D-xylulose 5-phosphate-binding residues include Ser-151, Glu-152, Ser-186, and His-209. Glu-152 is a binding site for Mn(2+). Gly-215 serves as a coordination point for NADPH. 4 residues coordinate 1-deoxy-D-xylulose 5-phosphate: Ser-222, Asn-227, Lys-228, and Glu-231. Glu-231 lines the Mn(2+) pocket.

Belongs to the DXR family. Requires Mg(2+) as cofactor. Mn(2+) is required as a cofactor.

It catalyses the reaction 2-C-methyl-D-erythritol 4-phosphate + NADP(+) = 1-deoxy-D-xylulose 5-phosphate + NADPH + H(+). The protein operates within isoprenoid biosynthesis; isopentenyl diphosphate biosynthesis via DXP pathway; isopentenyl diphosphate from 1-deoxy-D-xylulose 5-phosphate: step 1/6. Its function is as follows. Catalyzes the NADPH-dependent rearrangement and reduction of 1-deoxy-D-xylulose-5-phosphate (DXP) to 2-C-methyl-D-erythritol 4-phosphate (MEP). The sequence is that of 1-deoxy-D-xylulose 5-phosphate reductoisomerase from Aeromonas salmonicida (strain A449).